Reading from the N-terminus, the 628-residue chain is tRNA uridine 5-carboxymethylaminomethyl modification enzyme MnmG (628 aa).

13–18 (GAGHAG) contacts FAD. 273-287 (GPRYCPSIEDKIVRF) provides a ligand contact to NAD(+).

This sequence belongs to the MnmG family. Homodimer. Heterotetramer of two MnmE and two MnmG subunits. FAD serves as cofactor.

The protein resides in the cytoplasm. Functionally, NAD-binding protein involved in the addition of a carboxymethylaminomethyl (cmnm) group at the wobble position (U34) of certain tRNAs, forming tRNA-cmnm(5)s(2)U34. This chain is tRNA uridine 5-carboxymethylaminomethyl modification enzyme MnmG, found in Buchnera aphidicola subsp. Acyrthosiphon pisum (strain 5A).